A 301-amino-acid polypeptide reads, in one-letter code: Protein RESTRICTED TEV MOVEMENT 3 (301 aa).

Positions 6 to 134 constitute an MATH domain; it reads DKKITWTIKN…NGELKIVVEI (129 aa). Positions 235–289 form a coiled coil; sequence KLDWLEKKLYEVSEKKENEEASETGLQEMEEELKDMKQKCLEMEALVEKEKAKVS.

In terms of assembly, self-interacts. Interacts with RTM1.

Functionally, required for the restriction of long-distance movement of the pathogenic tobacco etch virus (TEV) without causing a hypersensitive response or inducing systemic acquired resistance. The protein is Protein RESTRICTED TEV MOVEMENT 3 (RTM3) of Arabidopsis thaliana (Mouse-ear cress).